Here is a 985-residue protein sequence, read N- to C-terminus: NAD kinase 2, chloroplastic (985 aa).

The N-terminal 62 residues, 1-62 (MFLCFCPCHV…KRRLRFVIRA (62 aa)), are a transit peptide targeting the chloroplast. The interval 335 to 380 (APKAEQVELFASIVSDSSKRPIYVHSKEGVWRTSAMVSRWKQYMTR) is calmodulin-binding. 2 disordered regions span residues 389-466 (SEES…PPGN) and 548-615 (FSNG…DEAG). Basic and acidic residues-rich tracts occupy residues 390 to 399 (EESKRREVSE) and 413 to 429 (VPDE…EVDS). The span at 548 to 569 (FSNGNVHASDNTNKSISDNRGN) shows a compositional bias: polar residues.

The protein belongs to the NAD kinase family. In terms of tissue distribution, expressed in leaves.

Its subcellular location is the plastid. The protein localises to the chloroplast. The catalysed reaction is NAD(+) + ATP = ADP + NADP(+) + H(+). Its function is as follows. Involved in chlorophyll synthesis and chloroplast protection against oxidative damage. The chain is NAD kinase 2, chloroplastic (NADK2) from Arabidopsis thaliana (Mouse-ear cress).